The primary structure comprises 291 residues: 4-hydroxy-tetrahydrodipicolinate synthase (291 aa).

T45 contacts pyruvate. The active-site Proton donor/acceptor is Y131. Catalysis depends on K159, which acts as the Schiff-base intermediate with substrate. A pyruvate-binding site is contributed by I202.

It belongs to the DapA family. Homotetramer; dimer of dimers.

It localises to the cytoplasm. It carries out the reaction L-aspartate 4-semialdehyde + pyruvate = (2S,4S)-4-hydroxy-2,3,4,5-tetrahydrodipicolinate + H2O + H(+). The protein operates within amino-acid biosynthesis; L-lysine biosynthesis via DAP pathway; (S)-tetrahydrodipicolinate from L-aspartate: step 3/4. Catalyzes the condensation of (S)-aspartate-beta-semialdehyde [(S)-ASA] and pyruvate to 4-hydroxy-tetrahydrodipicolinate (HTPA). The polypeptide is 4-hydroxy-tetrahydrodipicolinate synthase (Methanococcoides burtonii (strain DSM 6242 / NBRC 107633 / OCM 468 / ACE-M)).